A 463-amino-acid polypeptide reads, in one-letter code: Methionine aminopeptidase 2-1 (463 aa).

Positions 1–12 are enriched in basic and acidic residues; that stretch reads MGSKTPDGHRQG. The interval 1–96 is disordered; the sequence is MGSKTPDGHR…SGQQTTPPRV (96 aa). The span at 41–53 shows a compositional bias: acidic residues; sequence SGEDDEDGDDDEE. Residues 58–67 are compositionally biased toward polar residues; sequence DLNSRAQPNN. Positions 70–85 are enriched in basic residues; the sequence is KKRKRKNNKKKKKKRP. A substrate-binding site is contributed by H215. The a divalent metal cation site is built by D236, D247, and H316. Residue H324 coordinates substrate. Residues E349 and E444 each contribute to the a divalent metal cation site.

It belongs to the peptidase M24A family. Methionine aminopeptidase eukaryotic type 2 subfamily. Co(2+) serves as cofactor. The cofactor is Zn(2+). Mn(2+) is required as a cofactor. Requires Fe(2+) as cofactor.

The protein localises to the cytoplasm. It carries out the reaction Release of N-terminal amino acids, preferentially methionine, from peptides and arylamides.. Its function is as follows. Cotranslationally removes the N-terminal methionine from nascent proteins. The N-terminal methionine is often cleaved when the second residue in the primary sequence is small and uncharged (Met-Ala-, Cys, Gly, Pro, Ser, Thr, or Val). The polypeptide is Methionine aminopeptidase 2-1 (Arthroderma otae (strain ATCC MYA-4605 / CBS 113480) (Microsporum canis)).